A 705-amino-acid polypeptide reads, in one-letter code: Translation initiation factor IF-2 (705 aa).

The segment at 40-124 (DDQIKALDKK…QPAAPKEIPS (85 aa)) is disordered. The span at 41–58 (DQIKALDKKFKKEQKNDN) shows a compositional bias: basic and acidic residues. The span at 59–77 (KQSTQNNHQKSNNQNQNKG) shows a compositional bias: low complexity. Over residues 94-108 (KGNKKNNRNNKKNNK) the composition is skewed to basic residues. Positions 207–376 (ERPAVVTIMG…GLVAEVQELK (170 aa)) constitute a tr-type G domain. The tract at residues 216–223 (GHVDHGKT) is G1. Position 216 to 223 (216 to 223 (GHVDHGKT)) interacts with GTP. Residues 241 to 245 (GITQH) form a G2 region. Residues 262-265 (DTPG) are G3. GTP contacts are provided by residues 262–266 (DTPGH) and 316–319 (NKID). The segment at 316-319 (NKID) is G4. The interval 352–354 (SAL) is G5.

Belongs to the TRAFAC class translation factor GTPase superfamily. Classic translation factor GTPase family. IF-2 subfamily.

The protein resides in the cytoplasm. Functionally, one of the essential components for the initiation of protein synthesis. Protects formylmethionyl-tRNA from spontaneous hydrolysis and promotes its binding to the 30S ribosomal subunits. Also involved in the hydrolysis of GTP during the formation of the 70S ribosomal complex. This Staphylococcus aureus (strain MSSA476) protein is Translation initiation factor IF-2.